The chain runs to 363 residues: Outer membrane porin F (363 aa).

Positions 1–22 are cleaved as a signal peptide; sequence MMKRKILAAVIPALLAAATANA.

Belongs to the Gram-negative porin family. Homotrimer. Forms mixed heterotrimers with OmpC and with PhoE; other mixed heterotrimers with other porins are also probable.

The protein resides in the cell outer membrane. Forms pores that allow passive diffusion of small molecules across the outer membrane. This Salmonella typhimurium (strain SL1344) protein is Outer membrane porin F.